The sequence spans 579 residues: Cytochrome P450 monooxygenase ORF6 (579 aa).

N-linked (GlcNAc...) asparagine glycosylation occurs at asparagine 2. The chain crosses the membrane as a helical span at residues proline 7–tyrosine 29. Residues asparagine 194 and asparagine 390 are each glycosylated (N-linked (GlcNAc...) asparagine). Cysteine 512 lines the heme pocket.

Belongs to the cytochrome P450 family. Heme serves as cofactor.

The protein localises to the membrane. Its pathway is sesquiterpene biosynthesis. Cytochrome P450 monooxygenase; part of the gene cluster that mediates the biosynthesis of PR-toxin, a bicyclic sesquiterpene belonging to the eremophilane class and acting as a mycotoxin. The first step of the pathway is catalyzed by the aristolochene synthase which performs the cyclization of trans,trans-farnesyl diphosphate (FPP) to the bicyclic sesquiterpene aristolochene. Following the formation of aristolochene, the non-oxygenated aristolochene is converted to the trioxygenated intermediate eremofortin B, via 7-epi-neopetasone. This conversion appears to involve three enzymes, a hydroxysterol oxidase-like enzyme, the quinone-oxidase prx3 that forms the quinone-type-structure in the bicyclic nucleus of aristolochene with the C8-oxo group and the C-3 hydroxyl group, and the P450 monooxygenase ORF6 that introduces the epoxide at the double bond between carbons 1 and 2. No monoxy or dioxy-intermediates have been reported to be released to the broth, so these three early oxidative reactions may be coupled together. Eremofortin B is further oxidized by another P450 monooxygenase, that introduces a second epoxide between carbons 7 and 11 prior to acetylation to eremofortin A by the acetyltransferase ORF8. The second epoxidation may be performed by a second P450 monooxygenase. After the acetylation step, eremofortin A is converted to eremofortin C and then to PR-toxin. First the conversion of eremofortin A to eremofortin C proceeds by oxidation of the side chain of the molecule at C-12 and is catalyzed by the short-chain oxidoreductase prx1. The cytochrome P450 monooxygenase ORF6 is probably also involved in this step. The primary alcohol formed at C-12 is finally oxidized by the short-chain alcohol dehydrogenase prx4 that forms PR-toxin. The sequence is that of Cytochrome P450 monooxygenase ORF6 from Penicillium roqueforti (strain FM164).